The primary structure comprises 768 residues: P-selectin (768 aa).

An N-terminal signal peptide occupies residues 1–41 (MAGCPKGSWKPRLRSVVLGAAQLIWLSALISELVNRKKVAT). The Extracellular segment spans residues 42–709 (WTYNYSTKAY…QAGTLTIQEA (668 aa)). N-linked (GlcNAc...) asparagine glycosylation is found at Asn45, Asn54, and Asn107. Positions 58 to 158 (AFCKRHFTDL…PCFKRKRALC (101 aa)) constitute a C-type lectin domain. Disulfide bonds link Cys60–Cys158, Cys131–Cys150, Cys168–Cys183, Cys185–Cys194, Cys200–Cys244, Cys230–Cys257, Cys262–Cys306, Cys292–Cys319, Cys324–Cys368, Cys354–Cys381, Cys386–Cys430, Cys416–Cys443, Cys448–Cys492, Cys478–Cys505, Cys510–Cys554, Cys540–Cys567, Cys580–Cys624, Cys610–Cys637, Cys642–Cys686, and Cys672–Cys699. The Ca(2+) site is built by Glu121, Asn123, and Asn124. Asn123 contributes to the a carbohydrate binding site. 2 residues coordinate a carbohydrate: Glu133 and Asn146. 2 residues coordinate Ca(2+): Asn146 and Asp147. The region spanning 159-195 (YTASCQDMSCNSQGERIETIGSYTCSCYPGFYGPECE) is the EGF-like domain. Sushi domains follow at residues 198–259 (QECG…QCKA), 260–321 (VQCQ…TCEA), 322–383 (IACE…VCEA), 384–445 (LQCQ…ECQA), 446–507 (VSCT…MCEA), 508–569 (IKCP…TCKG), 578–639 (VRCP…VCRA), and 640–701 (VKCS…TCQA). Asn212 is a glycosylation site (N-linked (GlcNAc...) asparagine). An N-linked (GlcNAc...) asparagine glycan is attached at Asn347. N-linked (GlcNAc...) asparagine glycosylation occurs at Asn456. Asn603 carries an N-linked (GlcNAc...) asparagine glycan. Residues Asn654, Asn661, and Asn679 are each glycosylated (N-linked (GlcNAc...) asparagine). A helical membrane pass occupies residues 710–733 (LTYLGGALASTSGLAVGGTLLALL). At 734–768 (RKRLRKKDDGKCPLNPHSHLGTYGVFTNAAYDPTP) the chain is on the cytoplasmic side. Cys745 carries S-palmitoyl cysteine; alternate lipidation. Cys745 is lipidated: S-stearoyl cysteine; alternate. Residues 756–759 (YGVF) carry the Endocytosis signal motif. The interaction with SNX17 stretch occupies residues 759-768 (FTNAAYDPTP).

This sequence belongs to the selectin/LECAM family. In terms of assembly, interacts with SNX17. Interacts with SELPLG/PSGL1 and PODXL2 and mediates neutrophil adhesion and leukocyte rolling. This interaction requires the sialyl-Lewis X epitope of SELPLG and PODXL2, and specific tyrosine sulfation on SELPLG. Interacts (via C-type lectin domain) with alpha-IIb/beta3 integrin ITGA2B:ITGB3 and alpha-V/beta-3 integrin ITGAV:ITGB3. Interacts with alpha5/beta1 integrin ITGA5:ITGB1 and alpha4/beta1 integrin ITGA4:ITGB. In terms of tissue distribution, not detected in the absence of exposure to lipopolysaccharide (LPS). Detected only after exposure to lipopolysaccharide (LPS) in the tissues examined: spleen, lung, brain, liver, heart, kidney, thymus and small intestine.

The protein resides in the cell membrane. Functionally, ca(2+)-dependent receptor for myeloid cells that binds to carbohydrates on neutrophils and monocytes. Mediates the interaction of activated endothelial cells or platelets with leukocytes. The ligand recognized is sialyl-Lewis X. Mediates rapid rolling of leukocyte rolling over vascular surfaces during the initial steps in inflammation through interaction with SELPLG. Mediates cell-cell interactions and cell adhesion via the interaction with integrin alpha-IIb/beta3 (ITGA2B:ITGB3) and integrin alpha-V/beta-3 (ITGAV:ITGB3). The protein is P-selectin (Selp) of Rattus norvegicus (Rat).